A 288-amino-acid chain; its full sequence is ATP synthase gamma chain (288 aa).

This sequence belongs to the ATPase gamma chain family. As to quaternary structure, F-type ATPases have 2 components, CF(1) - the catalytic core - and CF(0) - the membrane proton channel. CF(1) has five subunits: alpha(3), beta(3), gamma(1), delta(1), epsilon(1). CF(0) has three main subunits: a, b and c.

The protein localises to the cell inner membrane. In terms of biological role, produces ATP from ADP in the presence of a proton gradient across the membrane. The gamma chain is believed to be important in regulating ATPase activity and the flow of protons through the CF(0) complex. The polypeptide is ATP synthase gamma chain (Legionella pneumophila (strain Corby)).